The following is a 335-amino-acid chain: MSDMNAHISEWMKETEESPIVMSSRIRLARNLENHVHPLMFPSEQDGFRVINEVQDVLPDLDLMRLDTMDQQNKMKLVAKHLISPELIKQPASAVLLNKDESISIMINEEDHIRIQAMGTDLSLQDLYNIASEIDDTLDQSLDISYDEHLGYLTTCPTNIGTGMRASVMLHLPGLSIMKRMNRIAQTINRFGFTIRGIYGEGSQVYGHIYQISNQLTLGKTEDEIIDNLTEVVQQIINEEMQIRERLTQYNELETLDRIYRSLGILQNSRIISMEEASYRLSEVKLGIDLGYLTLSDFKFNELMVSIQSAFIYNDEDETISVNEKRANILREYTQ.

One can recognise a Phosphagen kinase C-terminal domain in the interval 20–243 (IVMSSRIRLA…QQIINEEMQI (224 aa)). ATP contacts are provided by residues 23 to 27 (SSRIR), His-81, Arg-114, 165 to 169 (RASVM), and 196 to 201 (RGIYGE).

This sequence belongs to the ATP:guanido phosphotransferase family.

It carries out the reaction L-arginyl-[protein] + ATP = N(omega)-phospho-L-arginyl-[protein] + ADP + H(+). In terms of biological role, catalyzes the specific phosphorylation of arginine residues in proteins. This chain is Protein-arginine kinase, found in Staphylococcus haemolyticus (strain JCSC1435).